Reading from the N-terminus, the 488-residue chain is Ribulose bisphosphate carboxylase large chain (488 aa).

Residues N127 and T177 each contribute to the substrate site. The active-site Proton acceptor is K179. Residue K181 coordinates substrate. Residues K205, D207, and E208 each coordinate Mg(2+). Residue K205 is modified to N6-carboxylysine. H297 functions as the Proton acceptor in the catalytic mechanism. 3 residues coordinate substrate: R298, H330, and S382.

The protein belongs to the RuBisCO large chain family. Type I subfamily. In terms of assembly, heterohexadecamer of 8 large chains and 8 small chains. Mg(2+) is required as a cofactor.

The protein resides in the plastid. The protein localises to the chloroplast. The enzyme catalyses 2 (2R)-3-phosphoglycerate + 2 H(+) = D-ribulose 1,5-bisphosphate + CO2 + H2O. It carries out the reaction D-ribulose 1,5-bisphosphate + O2 = 2-phosphoglycolate + (2R)-3-phosphoglycerate + 2 H(+). RuBisCO catalyzes two reactions: the carboxylation of D-ribulose 1,5-bisphosphate, the primary event in carbon dioxide fixation, as well as the oxidative fragmentation of the pentose substrate in the photorespiration process. Both reactions occur simultaneously and in competition at the same active site. The polypeptide is Ribulose bisphosphate carboxylase large chain (Cyanidioschyzon merolae (strain NIES-3377 / 10D) (Unicellular red alga)).